The sequence spans 344 residues: Phosphate acyltransferase (344 aa).

The protein belongs to the PlsX family. In terms of assembly, homodimer. Probably interacts with PlsY.

It localises to the cytoplasm. It catalyses the reaction a fatty acyl-[ACP] + phosphate = an acyl phosphate + holo-[ACP]. It functions in the pathway lipid metabolism; phospholipid metabolism. Its function is as follows. Catalyzes the reversible formation of acyl-phosphate (acyl-PO(4)) from acyl-[acyl-carrier-protein] (acyl-ACP). This enzyme utilizes acyl-ACP as fatty acyl donor, but not acyl-CoA. The chain is Phosphate acyltransferase from Enterobacter sp. (strain 638).